The following is a 1587-amino-acid chain: DNA topoisomerase 2 (1587 aa).

The span at 1–15 (MSDADPFDMSDDDDN) shows a compositional bias: acidic residues. Residues 1–47 (MSDADPFDMSDDDDNSVLSHTPPKKQKKAPTTKKGGSKPLADVENES) form a disordered region. Residues 22 to 31 (PPKKQKKAPT) are compositionally biased toward basic residues. ATP is bound by residues Asn-126, Asn-155, 183 to 185 (SSN), and 196 to 203 (GRNGFGAK). Interaction with DNA stretches follow at residues 381-383 (KKK) and 381-386 (KKKNKN). 415–417 (QTK) contributes to the ATP binding site. The segment at 461-485 (MLKKTDGGRRSRMNNPKLTDANKAG) is disordered. One can recognise a Toprim domain in the interval 492–606 (CTLILTEGDS…SLLKIPEFLI (115 aa)). 3 residues coordinate Mg(2+): Glu-498, Asp-575, and Asp-577. Positions 743–1190 (IPSVVDGLKP…SKEDIWKRDL (448 aa)) constitute a Topo IIA-type catalytic domain. The active-site O-(5'-phospho-DNA)-tyrosine intermediate is Tyr-833. Positions 1016-1025 (KLSKTMTTTN) are interaction with DNA. Residues 1204–1587 (EARRQRKVAN…PRPRRPRRRS (384 aa)) are disordered. Residues 1271–1280 (LSFLGKSSAK) show a composition bias toward low complexity. A compositionally biased stretch (basic and acidic residues) spans 1308 to 1320 (PKSEPKADPKPKD). Residues 1321–1334 (EDEDIVMEDSDIEE) show a composition bias toward acidic residues. Basic and acidic residues predominate over residues 1348 to 1364 (VKPESEDGQAKIAEAPK). Residues 1365-1375 (RGRAAAKPKPK) are compositionally biased toward basic residues. Composition is skewed to acidic residues over residues 1379 to 1391 (EDEE…DDFM) and 1419 to 1430 (SDSDSDNGDDLL). Composition is skewed to polar residues over residues 1441–1451 (GSTNGASTSDS) and 1466–1475 (GLKTTASKAS). The span at 1512–1521 (DNEPEDDDDE) shows a compositional bias: acidic residues. A compositionally biased stretch (low complexity) spans 1524–1542 (KPAAKGKAAAKGKSTAAAA). Residues 1558–1568 (PKPPPRLPCPL) show a composition bias toward pro residues. Residues 1571–1587 (RRTHRSNPRPRRPRRRS) show a composition bias toward basic residues.

The protein belongs to the type II topoisomerase family. In terms of assembly, homodimer. Requires Mg(2+) as cofactor. It depends on Mn(2+) as a cofactor. Ca(2+) is required as a cofactor.

The protein localises to the nucleus. The catalysed reaction is ATP-dependent breakage, passage and rejoining of double-stranded DNA.. In terms of biological role, control of topological states of DNA by transient breakage and subsequent rejoining of DNA strands. Topoisomerase II makes double-strand breaks. This Penicillium chrysogenum (Penicillium notatum) protein is DNA topoisomerase 2 (TOP2).